We begin with the raw amino-acid sequence, 283 residues long: Gap junction beta-1 protein (283 aa).

Over 1-22 (MNWTGLYTLLSGVNRHSTAIGR) the chain is Cytoplasmic. The chain crosses the membrane as a helical span at residues 23 to 45 (VWLSVIFIFRIMVLVVAAESVWG). The Extracellular portion of the chain corresponds to 46–75 (DEKSSFICNTLQPGCNSVCYDQFFPISHVR). The helical transmembrane segment at 76-95 (LWSLQLILVSTPALLVAMHV) threads the bilayer. The Cytoplasmic portion of the chain corresponds to 96–130 (AHQQHIEKKMLRLEGHGDPLHLEEVKRHKVHISGT). The chain crosses the membrane as a helical span at residues 131–153 (LWWAYVISVVFRLLFEAVFMYVF). Residues 154–191 (YLLYPGYAMVRLVKCDVYPCPNTVDCFVSRPTEKTVFT) are Extracellular-facing. A helical transmembrane segment spans residues 192–214 (VFMLAASGICIILNVAEVVYLII). The Cytoplasmic portion of the chain corresponds to 215 to 283 (RACARRAQRR…AEKSDRCSAC (69 aa)). 4 positions are modified to phosphoserine: serine 233, serine 258, serine 266, and serine 277.

This sequence belongs to the connexin family. Beta-type (group I) subfamily. As to quaternary structure, a connexon is composed of a hexamer of connexins. Interacts with CNST.

Its subcellular location is the cell membrane. The protein localises to the cell junction. It is found in the gap junction. Its function is as follows. One gap junction consists of a cluster of closely packed pairs of transmembrane channels, the connexons, through which materials of low MW diffuse from one cell to a neighboring cell. This is Gap junction beta-1 protein (GJB1) from Macaca fascicularis (Crab-eating macaque).